Reading from the N-terminus, the 270-residue chain is Calpain small subunit 1 (270 aa).

N-acetylmethionine is present on Met1. Residue Ser6 is modified to Phosphoserine. The EF-hand 1; atypical domain maps to Glu98 to Arg132. Ca(2+) contacts are provided by Ala111, Asp114, Glu116, Glu121, Asp139, Asp154, Asp156, Thr158, Lys160, and Glu165. 4 EF-hand domains span residues Phe141 to Lys174, Asn171 to His206, Leu207 to Leu235, and Val236 to Ser270. Position 181 is an N6-acetyllysine (Lys181). Residues Asp184, Asp186, Ser188, Thr190, Glu195, and Asp227 each coordinate Ca(2+).

Homodimer or heterodimer of a large (catalytic) and a small (regulatory) subunit. In presence of calcium, the heterodimer dissociates.

The protein resides in the cytoplasm. It localises to the cell membrane. Regulatory subunit of the calcium-regulated non-lysosomal thiol-protease which catalyzes limited proteolysis of substrates involved in cytoskeletal remodeling and signal transduction. Essential for embryonic development. This Rattus norvegicus (Rat) protein is Calpain small subunit 1 (Capns1).